Here is a 346-residue protein sequence, read N- to C-terminus: Cytochrome c551 peroxidase (346 aa).

Positions 1-23 (MQSSQLLPLGSLLLSFATPLAQA) are cleaved as a signal peptide. Heme c-binding residues include Cys74, Cys77, His78, Cys220, Cys223, His224, His284, and Met298.

It depends on heme c as a cofactor. Post-translationally, binds 2 heme groups per subunit. Sequencing of the whole protein indicates about 20% starts on Val-247.

Its subcellular location is the periplasm. It catalyses the reaction 2 Fe(II)-[cytochrome c] + H2O2 + 2 H(+) = 2 Fe(III)-[cytochrome c] + 2 H2O. Catalyzes the peroxidative oxidation of azurin and cytochrome c551. Likely to provide protection against toxic peroxides. The chain is Cytochrome c551 peroxidase (ccpA) from Pseudomonas aeruginosa (strain ATCC 15692 / DSM 22644 / CIP 104116 / JCM 14847 / LMG 12228 / 1C / PRS 101 / PAO1).